Consider the following 113-residue polypeptide: Hydrogenase maturation factor HypA (113 aa).

Histidine 2 is a binding site for Ni(2+). Zn(2+) contacts are provided by cysteine 73, cysteine 76, cysteine 89, and cysteine 92.

The protein belongs to the HypA/HybF family.

Involved in the maturation of [NiFe] hydrogenases. Required for nickel insertion into the metal center of the hydrogenase. This is Hydrogenase maturation factor HypA from Chlorobaculum tepidum (strain ATCC 49652 / DSM 12025 / NBRC 103806 / TLS) (Chlorobium tepidum).